Reading from the N-terminus, the 326-residue chain is Protein MICROTUBULE BINDING PROTEIN 2C (326 aa).

Composition is skewed to polar residues over residues 1–15 and 34–46; these read MYEQ…QSDS and PHQS…SGNE. 2 disordered regions span residues 1–46 and 71–132; these read MYEQ…SGNE and ERSS…KALA. Positions 132-183 form a coiled coil; that stretch reads AGAEKEEMSRLREQVNDLQTKLSEKEEVLKSMEMSKNQVNEIQEKLEATNRL.

This sequence belongs to the microtubule binding protein 2C family. Interacts with STM. Expressed in seedlings, roots, flowers and developing ovules.

It localises to the cytoplasm. Its subcellular location is the cytoskeleton. Functionally, prevents homeodomain proteins (e.g. STM) association to plasmodesmata and, consequently, cell-to-cell transport. Binds to RNA. Alters STM RNA binding capacity. Regulates cytoskeleton (e.g. actin) organization that determinates cell shape. Regulates stomata patterning and drought tolerance. Involved in restricting tobamovirus (e.g. oilseed rape mosaic virus) infectivity, probably by interfering with cell-to-cell virus movement. This Arabidopsis thaliana (Mouse-ear cress) protein is Protein MICROTUBULE BINDING PROTEIN 2C.